Consider the following 422-residue polypeptide: MNVRTIADLGPDERAAFFDRDAGVDAVRDDVRDIVSQVHEEGDVALRRFAEEFDDVSVGNIDITDAAERAYEEIDDDVREAIEDAAANIRAFHERQVPEDWRDDFEGRELGRRFRPLDSAGVYAPGGTAAYPSSALMGVIPAKVAGVEHVAVATPPAEEVNPVTLAAIHVAGADAVYQVGGAQAIAALAYGTETVSATDIVVGPGNRWVTAAKAEVRGDVAIDFLAGPSEVMVVADGDADPELVAADLIAQAEHDENASVVAVTDDADLAEQVVDAVDEQADGREREAVIRAALDNDTSGVLLARSMSEAVLFAEEYAAEHLSIQAADDESLLERIPSAGSVFLGPYSPVAAGDYATGTNHVLPTGGNARVTGGLSVDTFVRSTTVQRLSEDSLGDIADTITTLAEAEGLDAHAESVRKRFE.

NAD(+) contacts are provided by Tyr-123, Gln-183, and Asn-206. Substrate contacts are provided by Ser-229, Gln-251, and His-254. Residues Gln-251 and His-254 each contribute to the Zn(2+) site. Catalysis depends on proton acceptor residues Glu-320 and His-321. Substrate-binding residues include His-321, Asp-354, Glu-408, and His-413. Asp-354 contributes to the Zn(2+) binding site. His-413 serves as a coordination point for Zn(2+).

This sequence belongs to the histidinol dehydrogenase family. Zn(2+) is required as a cofactor.

The enzyme catalyses L-histidinol + 2 NAD(+) + H2O = L-histidine + 2 NADH + 3 H(+). Its pathway is amino-acid biosynthesis; L-histidine biosynthesis; L-histidine from 5-phospho-alpha-D-ribose 1-diphosphate: step 9/9. Catalyzes the sequential NAD-dependent oxidations of L-histidinol to L-histidinaldehyde and then to L-histidine. This chain is Histidinol dehydrogenase, found in Haloarcula marismortui (strain ATCC 43049 / DSM 3752 / JCM 8966 / VKM B-1809) (Halobacterium marismortui).